The sequence spans 1046 residues: Toluene efflux pump membrane transporter TtgE (1046 aa).

12 helical membrane-spanning segments follow: residues 10–30, 339–359, 370–390, 392–412, 440–460, 470–490, 542–562, 871–891, 895–915, 927–947, 973–993, and 1008–1028; these read IFAW…LTKM, SVVH…FLFL, LAVP…GISI, VLTM…AIVV, GALV…AFFG, FAVT…IFTP, LIFA…PKAF, APML…ALYE, VPMS…LATL, VGLM…IEFA, IIMT…ATGA, and GMIT…VVVV.

This sequence belongs to the resistance-nodulation-cell division (RND) (TC 2.A.6) family.

The protein resides in the cell inner membrane. Functionally, the inner membrane transporter component of an inducible organic solvent efflux pump. Involved in export of toluene and styrene but not of m-xylene, propylbenzene or ethylbenzene. Is not involved in antibiotic or AMP efflux. In Pseudomonas putida (strain DOT-T1E), this protein is Toluene efflux pump membrane transporter TtgE (ttgE).